A 736-amino-acid polypeptide reads, in one-letter code: Polyphosphate kinase (736 aa).

An ATP-binding site is contributed by N91. Residues R421 and R451 each coordinate Mg(2+). Residue H481 is the Phosphohistidine intermediate of the active site. Residues Y514, R610, and H638 each coordinate ATP.

Belongs to the polyphosphate kinase 1 (PPK1) family. It depends on Mg(2+) as a cofactor. An intermediate of this reaction is the autophosphorylated ppk in which a phosphate is covalently linked to a histidine residue through a N-P bond.

It carries out the reaction [phosphate](n) + ATP = [phosphate](n+1) + ADP. Its function is as follows. Catalyzes the reversible transfer of the terminal phosphate of ATP to form a long-chain polyphosphate (polyP). The sequence is that of Polyphosphate kinase from Pseudomonas syringae pv. tomato (strain ATCC BAA-871 / DC3000).